A 109-amino-acid chain; its full sequence is Phosphoribosyl-AMP cyclohydrolase (109 aa).

Asp76 lines the Mg(2+) pocket. Cys77 is a Zn(2+) binding site. The Mg(2+) site is built by Asp78 and Asp80. Zn(2+) contacts are provided by Cys93 and Cys100.

The protein belongs to the PRA-CH family. As to quaternary structure, homodimer. The cofactor is Mg(2+). Requires Zn(2+) as cofactor.

The protein resides in the cytoplasm. The enzyme catalyses 1-(5-phospho-beta-D-ribosyl)-5'-AMP + H2O = 1-(5-phospho-beta-D-ribosyl)-5-[(5-phospho-beta-D-ribosylamino)methylideneamino]imidazole-4-carboxamide. It functions in the pathway amino-acid biosynthesis; L-histidine biosynthesis; L-histidine from 5-phospho-alpha-D-ribose 1-diphosphate: step 3/9. In terms of biological role, catalyzes the hydrolysis of the adenine ring of phosphoribosyl-AMP. This is Phosphoribosyl-AMP cyclohydrolase from Streptococcus mutans serotype c (strain ATCC 700610 / UA159).